The sequence spans 440 residues: tRNA-2-methylthio-N(6)-dimethylallyladenosine synthase (440 aa).

The 117-residue stretch at 5–121 (KLLYLETFGC…LPELVRAAEK (117 aa)) folds into the MTTase N-terminal domain. Residues cysteine 14, cysteine 50, cysteine 84, cysteine 159, cysteine 163, and cysteine 166 each coordinate [4Fe-4S] cluster. The region spanning 145 to 375 (RTDGVSRFVT…LDLQRRITLE (231 aa)) is the Radical SAM core domain. The TRAM domain maps to 378-440 (KSFVGTVQQV…QNSLQGELCR (63 aa)).

The protein belongs to the methylthiotransferase family. MiaB subfamily. In terms of assembly, monomer. The cofactor is [4Fe-4S] cluster.

It localises to the cytoplasm. The enzyme catalyses N(6)-dimethylallyladenosine(37) in tRNA + (sulfur carrier)-SH + AH2 + 2 S-adenosyl-L-methionine = 2-methylsulfanyl-N(6)-dimethylallyladenosine(37) in tRNA + (sulfur carrier)-H + 5'-deoxyadenosine + L-methionine + A + S-adenosyl-L-homocysteine + 2 H(+). Catalyzes the methylthiolation of N6-(dimethylallyl)adenosine (i(6)A), leading to the formation of 2-methylthio-N6-(dimethylallyl)adenosine (ms(2)i(6)A) at position 37 in tRNAs that read codons beginning with uridine. The chain is tRNA-2-methylthio-N(6)-dimethylallyladenosine synthase from Geotalea uraniireducens (strain Rf4) (Geobacter uraniireducens).